The sequence spans 431 residues: MDGYVMVGVNHQTTPMALRDRLVLDDPALAALLVRLRARGVTEALALSTCDRVEIFGHGGDPRALRALLLAELCAVGPIEPAALAGQMVDLRGLAVVAHMFRITSALESQVLGEPHILGQVKAAHRIARDAGTVGSATEALMQAAYAIAKRVRSETRISEGPVSLAAVAAQIARDLHGDLGETCLLLLGTQEMGELIAEQLQMAGVGRLVVCAPRRPRAEAVAARLGASVGDHGALLDLLPNADIVVVGVGGGLLALGEEAMRRTLKRRRNRPVFIVDAGVPGNVEPSVQRLEAAFLYDLADLEAVAEEGRAARDQASREAHALVADAVAAFERHRAERAAVPAIAALRAHFEGERLRALAEAPDDAEKATRLLVGRLLHGPSEALRDLAAGSADKEFMTVRAEMLLRRLFDLPTSIAETGATDREDGSKG.

Residues 49–52, Ser109, 114–116, and Gln120 each bind substrate; these read TCDR and EPH. Cys50 functions as the Nucleophile in the catalytic mechanism. 189-194 serves as a coordination point for NADP(+); it reads GTQEMG.

Belongs to the glutamyl-tRNA reductase family. In terms of assembly, homodimer.

It catalyses the reaction (S)-4-amino-5-oxopentanoate + tRNA(Glu) + NADP(+) = L-glutamyl-tRNA(Glu) + NADPH + H(+). It functions in the pathway porphyrin-containing compound metabolism; protoporphyrin-IX biosynthesis; 5-aminolevulinate from L-glutamyl-tRNA(Glu): step 1/2. It participates in porphyrin-containing compound metabolism; chlorophyll biosynthesis. Catalyzes the NADPH-dependent reduction of glutamyl-tRNA(Glu) to glutamate 1-semialdehyde (GSA). In Rhodospirillum rubrum (strain ATCC 11170 / ATH 1.1.1 / DSM 467 / LMG 4362 / NCIMB 8255 / S1), this protein is Glutamyl-tRNA reductase.